We begin with the raw amino-acid sequence, 155 residues long: Small ribosomal subunit protein uS7cz/uS7cy (155 aa).

It belongs to the universal ribosomal protein uS7 family. As to quaternary structure, part of the 30S ribosomal subunit.

The protein resides in the plastid. It is found in the chloroplast. One of the primary rRNA binding proteins, it binds directly to 16S rRNA where it nucleates assembly of the head domain of the 30S subunit. In Pelargonium hortorum (Common geranium), this protein is Small ribosomal subunit protein uS7cz/uS7cy (rps7-A).